Reading from the N-terminus, the 322-residue chain is tRNA dimethylallyltransferase (322 aa).

ATP is bound at residue 19–26 (GPTASGKT). 21 to 26 (TASGKT) is a binding site for substrate. Interaction with substrate tRNA stretches follow at residues 44-47 (DSAL), 168-172 (QRIQR), and 255-260 (RCVGYR).

Belongs to the IPP transferase family. In terms of assembly, monomer. It depends on Mg(2+) as a cofactor.

It catalyses the reaction adenosine(37) in tRNA + dimethylallyl diphosphate = N(6)-dimethylallyladenosine(37) in tRNA + diphosphate. Functionally, catalyzes the transfer of a dimethylallyl group onto the adenine at position 37 in tRNAs that read codons beginning with uridine, leading to the formation of N6-(dimethylallyl)adenosine (i(6)A). The chain is tRNA dimethylallyltransferase from Cupriavidus necator (strain ATCC 17699 / DSM 428 / KCTC 22496 / NCIMB 10442 / H16 / Stanier 337) (Ralstonia eutropha).